Here is a 239-residue protein sequence, read N- to C-terminus: 1-(5-phosphoribosyl)-5-[(5-phosphoribosylamino)methylideneamino] imidazole-4-carboxamide isomerase (239 aa).

The active-site Proton acceptor is Asp-8. Residue Asp-129 is the Proton donor of the active site.

This sequence belongs to the HisA/HisF family.

It localises to the cytoplasm. It catalyses the reaction 1-(5-phospho-beta-D-ribosyl)-5-[(5-phospho-beta-D-ribosylamino)methylideneamino]imidazole-4-carboxamide = 5-[(5-phospho-1-deoxy-D-ribulos-1-ylimino)methylamino]-1-(5-phospho-beta-D-ribosyl)imidazole-4-carboxamide. It functions in the pathway amino-acid biosynthesis; L-histidine biosynthesis; L-histidine from 5-phospho-alpha-D-ribose 1-diphosphate: step 4/9. The chain is 1-(5-phosphoribosyl)-5-[(5-phosphoribosylamino)methylideneamino] imidazole-4-carboxamide isomerase from Bacillus cereus (strain ZK / E33L).